A 137-amino-acid chain; its full sequence is uncharacterized protein (137 aa).

The next 4 membrane-spanning stretches (helical) occupy residues 20–39, 44–61, 86–105, and 109–131; these read YGKI…GYAV, WFIT…LSLV, VEIF…ALDL, and AALA…YGYY.

The protein resides in the cell membrane. This is an uncharacterized protein from Archaeoglobus fulgidus (strain ATCC 49558 / DSM 4304 / JCM 9628 / NBRC 100126 / VC-16).